Consider the following 248-residue polypeptide: tRNA (guanine-N(1)-)-methyltransferase (248 aa).

S-adenosyl-L-methionine-binding positions include G113 and 133 to 138 (IGDFVL).

It belongs to the RNA methyltransferase TrmD family. Homodimer.

It localises to the cytoplasm. It carries out the reaction guanosine(37) in tRNA + S-adenosyl-L-methionine = N(1)-methylguanosine(37) in tRNA + S-adenosyl-L-homocysteine + H(+). Specifically methylates guanosine-37 in various tRNAs. The chain is tRNA (guanine-N(1)-)-methyltransferase from Dehalococcoides mccartyi (strain CBDB1).